The following is a 489-amino-acid chain: Glutamyl-tRNA(Gln) amidotransferase subunit A (489 aa).

Residues K79 and S158 each act as charge relay system in the active site. S182 serves as the catalytic Acyl-ester intermediate.

Belongs to the amidase family. GatA subfamily. As to quaternary structure, heterotrimer of A, B and C subunits.

It catalyses the reaction L-glutamyl-tRNA(Gln) + L-glutamine + ATP + H2O = L-glutaminyl-tRNA(Gln) + L-glutamate + ADP + phosphate + H(+). Allows the formation of correctly charged Gln-tRNA(Gln) through the transamidation of misacylated Glu-tRNA(Gln) in organisms which lack glutaminyl-tRNA synthetase. The reaction takes place in the presence of glutamine and ATP through an activated gamma-phospho-Glu-tRNA(Gln). The chain is Glutamyl-tRNA(Gln) amidotransferase subunit A from Anaplasma marginale (strain Florida).